Consider the following 1296-residue polypeptide: Phosphoribosylformylglycinamidine synthase (1296 aa).

Positions 304–323 (WPGAATGSGGEIRDEGATGR) are disordered. ATP-binding positions include 306 to 317 (GAATGSGGEIRD) and A677. Mg(2+) contacts are provided by D678, E717, N721, and D885. S887 lines the ATP pocket. A compositionally biased stretch (basic and acidic residues) spans 1000 to 1013 (PDCADQEHQAKQDE). The disordered stretch occupies residues 1000 to 1019 (PDCADQEHQAKQDESDPGLN). In terms of domain architecture, Glutamine amidotransferase type-1 spans 1043-1296 (VAVLREQGVN…MFRNARKQLG (254 aa)). Catalysis depends on C1136, which acts as the Nucleophile. Residues H1261 and E1263 contribute to the active site.

It in the N-terminal section; belongs to the FGAMS family. Monomer.

The protein resides in the cytoplasm. It catalyses the reaction N(2)-formyl-N(1)-(5-phospho-beta-D-ribosyl)glycinamide + L-glutamine + ATP + H2O = 2-formamido-N(1)-(5-O-phospho-beta-D-ribosyl)acetamidine + L-glutamate + ADP + phosphate + H(+). It functions in the pathway purine metabolism; IMP biosynthesis via de novo pathway; 5-amino-1-(5-phospho-D-ribosyl)imidazole from N(2)-formyl-N(1)-(5-phospho-D-ribosyl)glycinamide: step 1/2. Phosphoribosylformylglycinamidine synthase involved in the purines biosynthetic pathway. Catalyzes the ATP-dependent conversion of formylglycinamide ribonucleotide (FGAR) and glutamine to yield formylglycinamidine ribonucleotide (FGAM) and glutamate. This is Phosphoribosylformylglycinamidine synthase from Yersinia pestis bv. Antiqua (strain Nepal516).